The chain runs to 212 residues: Large ribosomal subunit protein uL3 (212 aa).

Q153 carries the N5-methylglutamine modification.

Belongs to the universal ribosomal protein uL3 family. As to quaternary structure, part of the 50S ribosomal subunit. Forms a cluster with proteins L14 and L19. Methylated by PrmB.

One of the primary rRNA binding proteins, it binds directly near the 3'-end of the 23S rRNA, where it nucleates assembly of the 50S subunit. In Idiomarina loihiensis (strain ATCC BAA-735 / DSM 15497 / L2-TR), this protein is Large ribosomal subunit protein uL3.